A 26-amino-acid polypeptide reads, in one-letter code: Mucus envelope protein (26 aa).

In terms of processing, glycosylated. In terms of tissue distribution, produced by the opercular gland in the gill cavity and secreted as part of the mucus cocoon.

It is found in the secreted. Exhibits antibacterial activity. May play a role in protection against parasite settlement. The protein is Mucus envelope protein of Scarus vetula (Queen parrotfish).